The following is a 111-amino-acid chain: Cystatin (111 aa).

In terms of domain architecture, Cystatin spans 3–103 (GGLSPRDVTD…CRFEVWSRPW (101 aa)). Positions 47-51 (QVVSG) match the Secondary area of contact motif. Cys-65 and Cys-81 are joined by a disulfide.

The protein belongs to the cystatin family. As to expression, expressed by the venom gland.

Its subcellular location is the secreted. In terms of biological role, inhibits various C1 cysteine proteases including cathepsin L, papain and cathepsin B. This protein has no toxic activity and its function in the venom is unknown. It may play a role as housekeeping or regulatory protein. In Bitis arietans (African puff adder), this protein is Cystatin.